A 267-amino-acid chain; its full sequence is Short chain dehydrogenase claC (267 aa).

4 residues coordinate NADP(+): I27, D73, N100, and R133. Residues S149 and S150 each act as proton donor in the active site. Positions 164, 168, and 199 each coordinate NADP(+). The active-site Proton acceptor is the Y164. The active-site Lowers pKa of active site Tyr is the K168.

Belongs to the short-chain dehydrogenases/reductases (SDR) family.

It participates in pigment biosynthesis. Its function is as follows. Non-reducing polyketide synthase; part of the gene cluster that mediates the biosynthesis of the bianthraquinone cladofulvin, a conidial pigment not required for virulence but that plays a role in fitness and resistance to environmental stresses including UV light and low-temperature stress. The pathway begins with the synthesis of atrochrysone thioester by the polyketide synthase (PKS) claG. The atrochrysone carboxyl ACP thioesterase claF then breaks the thioester bond and releases the atrochrysone carboxylic acid from claG. This compound is decarboxylated by claH to yield emodin, which is further converted to chrysophanol hydroquinone by the reductase claC and the dehydratase claB. The cytochrome monooxygenase P450 claM then catalyzes the dimerization of nataloe-emodin to cladofulvin. In Passalora fulva (Tomato leaf mold), this protein is Short chain dehydrogenase claC.